A 178-amino-acid chain; its full sequence is Adenine phosphoribosyltransferase (178 aa).

It belongs to the purine/pyrimidine phosphoribosyltransferase family. In terms of assembly, homodimer.

The protein resides in the cytoplasm. It catalyses the reaction AMP + diphosphate = 5-phospho-alpha-D-ribose 1-diphosphate + adenine. The protein operates within purine metabolism; AMP biosynthesis via salvage pathway; AMP from adenine: step 1/1. Catalyzes a salvage reaction resulting in the formation of AMP, that is energically less costly than de novo synthesis. This is Adenine phosphoribosyltransferase from Pseudoalteromonas atlantica (strain T6c / ATCC BAA-1087).